The following is a 117-amino-acid chain: Non-specific lipid-transfer protein Lac s 1 (117 aa).

The first 25 residues, 1–25 (MARMAMMILCVVLTCMVVATPYTEA), serve as a signal peptide directing secretion. 4 disulfide bridges follow: cysteine 29-cysteine 76, cysteine 39-cysteine 53, cysteine 54-cysteine 99, and cysteine 74-cysteine 113.

Belongs to the plant LTP family.

Plant non-specific lipid-transfer proteins transfer phospholipids as well as galactolipids across membranes. May play a role in wax or cutin deposition in the cell walls of expanding epidermal cells and certain secretory tissues. The chain is Non-specific lipid-transfer protein Lac s 1 from Lactuca sativa (Garden lettuce).